Here is a 93-residue protein sequence, read N- to C-terminus: Small ribosomal subunit protein uS19 (93 aa).

It belongs to the universal ribosomal protein uS19 family.

Functionally, protein S19 forms a complex with S13 that binds strongly to the 16S ribosomal RNA. The chain is Small ribosomal subunit protein uS19 from Alkaliphilus oremlandii (strain OhILAs) (Clostridium oremlandii (strain OhILAs)).